Reading from the N-terminus, the 425-residue chain is Serine--tRNA ligase (425 aa).

Thr230–Glu232 contributes to the L-serine binding site. Arg261 to Glu263 provides a ligand contact to ATP. Glu284 lines the L-serine pocket. Position 348 to 351 (Glu348 to Ser351) interacts with ATP. Ser384 lines the L-serine pocket.

The protein belongs to the class-II aminoacyl-tRNA synthetase family. Type-1 seryl-tRNA synthetase subfamily. In terms of assembly, homodimer. The tRNA molecule binds across the dimer.

It localises to the cytoplasm. It catalyses the reaction tRNA(Ser) + L-serine + ATP = L-seryl-tRNA(Ser) + AMP + diphosphate + H(+). The catalysed reaction is tRNA(Sec) + L-serine + ATP = L-seryl-tRNA(Sec) + AMP + diphosphate + H(+). The protein operates within aminoacyl-tRNA biosynthesis; selenocysteinyl-tRNA(Sec) biosynthesis; L-seryl-tRNA(Sec) from L-serine and tRNA(Sec): step 1/1. Its function is as follows. Catalyzes the attachment of serine to tRNA(Ser). Is also able to aminoacylate tRNA(Sec) with serine, to form the misacylated tRNA L-seryl-tRNA(Sec), which will be further converted into selenocysteinyl-tRNA(Sec). This chain is Serine--tRNA ligase, found in Streptococcus equi subsp. zooepidemicus (strain H70).